The sequence spans 185 residues: Elongation factor P 1 (185 aa).

This sequence belongs to the elongation factor P family.

The protein resides in the cytoplasm. Its pathway is protein biosynthesis; polypeptide chain elongation. Its function is as follows. Involved in peptide bond synthesis. Stimulates efficient translation and peptide-bond synthesis on native or reconstituted 70S ribosomes in vitro. Probably functions indirectly by altering the affinity of the ribosome for aminoacyl-tRNA, thus increasing their reactivity as acceptors for peptidyl transferase. In Chlamydia trachomatis serovar D (strain ATCC VR-885 / DSM 19411 / UW-3/Cx), this protein is Elongation factor P 1 (efp1).